The primary structure comprises 337 residues: Adenylosuccinate synthetase (337 aa).

GTP-binding positions include 12–18 (GDEGKGK) and 42–44 (GHT). The Proton acceptor role is filled by Asp-13. Residues Asp-13 and Gly-42 each coordinate Mg(2+). IMP contacts are provided by residues 13–16 (DEGK), 40–43 (NAGH), Thr-124, Arg-138, Gln-176, Thr-191, and Arg-253. His-43 serves as the catalytic Proton donor. 249 to 255 (TVTGRRR) serves as a coordination point for substrate. Residues Arg-255, 281 to 283 (GVD), and 321 to 323 (STG) contribute to the GTP site.

It belongs to the adenylosuccinate synthetase family. In terms of assembly, homodimer. Mg(2+) is required as a cofactor.

It is found in the cytoplasm. It catalyses the reaction IMP + L-aspartate + GTP = N(6)-(1,2-dicarboxyethyl)-AMP + GDP + phosphate + 2 H(+). Its pathway is purine metabolism; AMP biosynthesis via de novo pathway; AMP from IMP: step 1/2. Its function is as follows. Plays an important role in the de novo pathway of purine nucleotide biosynthesis. Catalyzes the first committed step in the biosynthesis of AMP from IMP. The protein is Adenylosuccinate synthetase of Archaeoglobus fulgidus (strain ATCC 49558 / DSM 4304 / JCM 9628 / NBRC 100126 / VC-16).